The sequence spans 639 residues: Chaperone protein DnaK (639 aa).

Position 198 is a phosphothreonine; by autocatalysis (Thr198). The tract at residues Gln602–Lys639 is disordered. A compositionally biased stretch (acidic residues) spans Asp625 to Lys639.

The protein belongs to the heat shock protein 70 family.

In terms of biological role, acts as a chaperone. This Shewanella baltica (strain OS195) protein is Chaperone protein DnaK.